The primary structure comprises 425 residues: Histone-binding protein RBBP7 (425 aa).

WD repeat units follow at residues 47–122 (QWLP…KINH), 128–173 (RARY…LRLR), 181–217 (GLSW…KVVD), 228–269 (VVED…HSVD), 275–312 (VNCL…LHSF), 318–369 (EIFQ…LFIH), and 376–403 (ISDF…IWQM).

Belongs to the WD repeat RBAP46/RBAP48/MSI1 family. Binds directly to helix 1 of the histone fold of histone H4, a region that is not accessible when H4 is in chromatin.

It localises to the nucleus. In terms of biological role, core histone-binding subunit that may target chromatin remodeling factors, histone acetyltransferases and histone deacetylases to their histone substrates in a manner that is regulated by nucleosomal DNA. Component of several complexes which regulate chromatin metabolism. The polypeptide is Histone-binding protein RBBP7 (rbbp7) (Xenopus laevis (African clawed frog)).